The primary structure comprises 129 residues: Small ribosomal subunit protein uS9 (129 aa).

It belongs to the universal ribosomal protein uS9 family.

This is Small ribosomal subunit protein uS9 from Helicobacter hepaticus (strain ATCC 51449 / 3B1).